The primary structure comprises 167 residues: Protein-lysine myristoyltransferase RtxC (167 aa).

Active-site residues include His20 and Asp89.

Belongs to the RTX toxin acyltransferase family.

It localises to the cytoplasm. It carries out the reaction tetradecanoyl-[ACP] + L-lysyl-[protein] = N(6)-tetradecanoyl-L-lysyl-[protein] + holo-[ACP] + H(+). Its function is as follows. Protein-lysine myristoyltransferase that catalyzes myristoylation of the protoxin (RtxA) at two internal lysine residues, thereby converting it to the active toxin. The chain is Protein-lysine myristoyltransferase RtxC from Kingella kingae.